Reading from the N-terminus, the 1012-residue chain is Antigenic heat-stable 120 kDa protein (1012 aa).

Disordered stretches follow at residues D1 to P73 and G348 to Q396. Over residues E12 to E27 the composition is skewed to basic and acidic residues. Residues S47 to S61 show a composition bias toward low complexity. Polar residues-rich tracts occupy residues G62–P73, G348–Q373, and P380–Q396.

Its subcellular location is the cytoplasm. This chain is Antigenic heat-stable 120 kDa protein (sca4), found in Rickettsia slovaca.